Consider the following 214-residue polypeptide: Dephospho-CoA kinase (214 aa).

In terms of domain architecture, DPCK spans 3–202 (KIGLTGGIGS…DRWLALAGAA (200 aa)). 11–16 (GSGKSR) is an ATP binding site.

This sequence belongs to the CoaE family.

The protein resides in the cytoplasm. It catalyses the reaction 3'-dephospho-CoA + ATP = ADP + CoA + H(+). The protein operates within cofactor biosynthesis; coenzyme A biosynthesis; CoA from (R)-pantothenate: step 5/5. Catalyzes the phosphorylation of the 3'-hydroxyl group of dephosphocoenzyme A to form coenzyme A. The polypeptide is Dephospho-CoA kinase (Bordetella pertussis (strain Tohama I / ATCC BAA-589 / NCTC 13251)).